Here is a 190-residue protein sequence, read N- to C-terminus: Putative resolvase R771 (190 aa).

Positions 11 to 30 (SSVLGVHQRTLYQWDKKGWI) form a DNA-binding region, H-T-H motif. A Resolvase/invertase-type recombinase catalytic domain is found at 61-190 (LSICYVRVSS…RNGLKKYSNK (130 aa)). Positions 66–92 (VRVSSNNQKDDLERQIKFMKKKYPNHT) form a coiled coil. Residue serine 69 is the O-(5'-phospho-DNA)-serine intermediate of the active site.

The protein belongs to the site-specific recombinase resolvase family.

Resolvase catalyzes the resolution (a site-specific recombination) of the cointegrated replicon to yield the final transposition products. The chain is Putative resolvase R771 from Acanthamoeba polyphaga (Amoeba).